A 91-amino-acid polypeptide reads, in one-letter code: Aspartyl/glutamyl-tRNA(Asn/Gln) amidotransferase subunit C (91 aa).

A disordered region spans residues 68 to 91; sequence LDQDDALANAPETEDGRFKGPNVS.

The protein belongs to the GatC family. In terms of assembly, heterotrimer of A, B and C subunits.

It catalyses the reaction L-glutamyl-tRNA(Gln) + L-glutamine + ATP + H2O = L-glutaminyl-tRNA(Gln) + L-glutamate + ADP + phosphate + H(+). The catalysed reaction is L-aspartyl-tRNA(Asn) + L-glutamine + ATP + H2O = L-asparaginyl-tRNA(Asn) + L-glutamate + ADP + phosphate + 2 H(+). Its function is as follows. Allows the formation of correctly charged Asn-tRNA(Asn) or Gln-tRNA(Gln) through the transamidation of misacylated Asp-tRNA(Asn) or Glu-tRNA(Gln) in organisms which lack either or both of asparaginyl-tRNA or glutaminyl-tRNA synthetases. The reaction takes place in the presence of glutamine and ATP through an activated phospho-Asp-tRNA(Asn) or phospho-Glu-tRNA(Gln). The sequence is that of Aspartyl/glutamyl-tRNA(Asn/Gln) amidotransferase subunit C from Halobacterium salinarum (strain ATCC 29341 / DSM 671 / R1).